The chain runs to 231 residues: ATP phosphoribosyltransferase (231 aa).

This sequence belongs to the ATP phosphoribosyltransferase family. Short subfamily. In terms of assembly, heteromultimer composed of HisG and HisZ subunits.

The protein localises to the cytoplasm. The enzyme catalyses 1-(5-phospho-beta-D-ribosyl)-ATP + diphosphate = 5-phospho-alpha-D-ribose 1-diphosphate + ATP. It functions in the pathway amino-acid biosynthesis; L-histidine biosynthesis; L-histidine from 5-phospho-alpha-D-ribose 1-diphosphate: step 1/9. Catalyzes the condensation of ATP and 5-phosphoribose 1-diphosphate to form N'-(5'-phosphoribosyl)-ATP (PR-ATP). Has a crucial role in the pathway because the rate of histidine biosynthesis seems to be controlled primarily by regulation of HisG enzymatic activity. The protein is ATP phosphoribosyltransferase of Brucella melitensis biotype 2 (strain ATCC 23457).